A 375-amino-acid polypeptide reads, in one-letter code: uncharacterized protein (375 aa).

An Isoglutamyl lysine isopeptide (Lys-Gln) (interchain with Q-Cter in protein Pup) cross-link involves residue Lys99.

Belongs to the IMPDH/GMPR family.

This is an uncharacterized protein from Mycolicibacterium smegmatis (strain ATCC 700084 / mc(2)155) (Mycobacterium smegmatis).